The sequence spans 48 residues: uncharacterized protein (48 aa).

The helical transmembrane segment at 20 to 37 (ILASPLFFANYVLHAAIH) threads the bilayer.

The protein localises to the membrane. This is an uncharacterized protein from Saccharomyces cerevisiae (strain ATCC 204508 / S288c) (Baker's yeast).